Consider the following 890-residue polypeptide: DNA mismatch repair protein MutS (890 aa).

ATP is bound at residue 645–652 (GPNMAGKS).

The protein belongs to the DNA mismatch repair MutS family.

Its function is as follows. This protein is involved in the repair of mismatches in DNA. It is possible that it carries out the mismatch recognition step. This protein has a weak ATPase activity. The protein is DNA mismatch repair protein MutS of Rickettsia africae (strain ESF-5).